Consider the following 425-residue polypeptide: MSEELSHGKDYTLESDSELRFEIEQKDAKVLVTLISGFAELFGTELVKKKKYEFGVGAKVAIFTYQGCVLHVSGKMDVCYISKETPMVQYLNCHAALEQFRTDAEDKDQRGPVAMVVGPMDVGKSTLCRILLNYAVRVGRRPLYADLDVGQGAIAISGNVATILIERPASVEDGFPKTAPLVYHFGHKSPGGNSVLYNSVVSKMAEVTLQSLNSNKRTKSSGIIINTCGWVKGSGYAHLLHAAQAYGACAIFVLDQERLYNELLRDVPQGVNVVLLPKSGGVVERSKELRHESRDLRMKEYFYGNPRAPFYPFSFEVKFQDLRLYKIGAPPLPDSCMPIGMKAEDNKTKVVAVTPTPALIHHILALSFAESVEDDVIGSNVAGFCCVTEVDMERQAVMVLSPQPRPLPPNSLLLWSELQFMDNHT.

ATP-binding positions include glutamate 18, lysine 59, and 121–126 (DVGKST).

This sequence belongs to the Clp1 family. Clp1 subfamily.

It is found in the nucleus. In terms of biological role, required for endonucleolytic cleavage during polyadenylation-dependent pre-mRNA 3'-end formation. The chain is Protein CLP1 homolog (cbc) from Drosophila ananassae (Fruit fly).